Here is a 396-residue protein sequence, read N- to C-terminus: Phosphoglycerate kinase (396 aa).

Substrate contacts are provided by residues 21-23 (DFN), arginine 36, 59-62 (HLGK), arginine 119, and arginine 156. ATP contacts are provided by residues lysine 206, glycine 294, glutamate 325, and 352-355 (GGDS).

Belongs to the phosphoglycerate kinase family. In terms of assembly, monomer.

Its subcellular location is the cytoplasm. The enzyme catalyses (2R)-3-phosphoglycerate + ATP = (2R)-3-phospho-glyceroyl phosphate + ADP. It participates in carbohydrate degradation; glycolysis; pyruvate from D-glyceraldehyde 3-phosphate: step 2/5. The chain is Phosphoglycerate kinase from Listeria monocytogenes serotype 4a (strain HCC23).